A 470-amino-acid polypeptide reads, in one-letter code: Histidine--tRNA ligase (470 aa).

It belongs to the class-II aminoacyl-tRNA synthetase family. As to quaternary structure, homodimer.

It is found in the cytoplasm. It catalyses the reaction tRNA(His) + L-histidine + ATP = L-histidyl-tRNA(His) + AMP + diphosphate + H(+). The chain is Histidine--tRNA ligase from Xanthomonas oryzae pv. oryzae (strain PXO99A).